Consider the following 180-residue polypeptide: Membrane protein UL121 (180 aa).

The N-terminal stretch at 1-27 is a signal peptide; the sequence is MWGCGWSRILVLLLLMCMALMARGTYG. Residues 143–163 traverse the membrane as a helical segment; that stretch reads LGLLYAVCLILSFSIVTAALW.

It belongs to the HHV-5 UL121 protein family.

The protein resides in the host membrane. In Human cytomegalovirus (strain Merlin) (HHV-5), this protein is Membrane protein UL121 (UL121).